Consider the following 2897-residue polypeptide: MTDPMMDFFDDANLFGETLEGLSDDAFVQPGPVSLVDELNLGAEFEPLHIDSLNHVQGTPTHQKMTDFEQLNQFDSIKFHHVNQSFGSPAEHVLSPHSQFNCSPIHPQNQPNGLFPDVSDGSPMWGHQTATTISNQNGSPFHQQGHSHSMHQNKSFVAHHDFALFQANEQQTQCTSLRSQQNRNNLNPGQNSLSQSKNFMNVSGPHRVNVNHPPQMTNASNSQQSISMQQFSQTSNPSAHFHKCSSHQEGNFNGPSPNMTSCSVSNSQQFSSHYSFSSNHISPNSLLQSSAVLASNHTNQTLSDFTGSNSFSPHRGIKQESTQHILNPNTSLNSNNFQILHSSHPQGNYSNSKLSPVHMNFPDPVDSGTQMGHFNDHVETNGFSSLEENLLHQVESQTEPFTGLDPEDLLQEGLLPHFDESTFGQDNSSHILDHDLDRQFTSHLVTRPSDMAQTQLQSQARSWHSSFSNHQHLHDRNHLCLQRQPPSSKKSDGSGTYTKLQNTQVRVMSEKKQRKKVESESKQEKANRIISEAIAKAKERGERNIPRVMSPENFPTASVEGKEEKKGRRMKSKPKDKDSKKTKTCSKLKEKTKIGKLIITLGKKQKRKNESSDEISDAEQMPQHTLKDQDSQKRRSNRQIKRKKYAEDIEGKQSEEEVKGSMKIKKNSAPLPGEQPLQLFVENPSEEDAAIVDKILSSRTVKKEISPGVMIDTEEFFVKYKNYSYLHCEWATEEQLLKDKRIQQKIKRFKLRQAQRAHFFADMEEEPFNPDYVEVDRVLEVSFCEDKDTGEPVIYYLVKWCSLPYEDSTWELKEDVDLAKIEEFEQLQASRPDTRRLDRPPSNIWKKIDQSRDYKNGNQLREYQLEGLNWLLFNWYNRRNCILADEMGLGKTIQSITFLYEILLTGIRGPFLIIAPLSTIANWEREFRTWTDINVVVYHGSLISRQMIQQYEMYFRDSQGRIIRGAYRFQAIITTFEMILGGCGELNAIEWRCVIIDEAHRLKNKNCKLLEGLKLMNLEHKVLLTGTPLQNTVEELFSLLHFLEPLRFPSESTFMQEFGDLKTEEQVQKLQAILKPMMLRRLKEDVEKKLAPKEETIIEVELTNIQKKYYRAILEKNFSFLSKGAGQTNVPNLVNTMMELRKCCNHPYLIKGAEEKILGEFRDTYNPAASDFHLQAMIQSAGKLVLIDKLLPKMKAGGHKVLIFSQMVRCLDILEDYLIHKRYLYERIDGRVRGNLRQAAIDRFSKPDSDRFVFLLCTRAGGLGINLTAADTCIIFDSDWNPQNDLQAQARCHRIGQNKAVKVYRLVTRNSYEREMFDRASLKLGLDKAVLQSMSGRESNVGGIQQLSKKEIEDLLRRGAYGAIMEEEDEGSKFCEEDIDQILLRRTKTITIESEGRGSTFAKASFVASGNRTDISLDDPNFWQKWAKKAEIDIEAISGRNSLVIDTPRIRKQTRPFSATKDELAELSEAESEGDEKPKLRRPCDRSNGYGRTECFRVEKNLLVYGWGRWREILSHGRFKRQLNEHDVEIICRALLAYCLVHYRGDEKIKGFIWDLITPTEDGQTRELQNHLGLSAPVPRGRKGKKVKTQTSSFDIQKAEWLRKYNPEQLLQDEGYKKHIKHHCNKVLLRVRMLYYLKQEVIGNECQKVFDGVDASDIDVWVPEPDHSEVPAEWWDFDADKSLLIGVFKHGYEKYNTIRADPALCFLERVGKPDEKAVAAEQRANDYMDGDVEDPEYKPAPAIFKDDIEDDVSSPGDLVIADGDGQLMEGDKVYWPTQSALTTRLRRLITAYQRTNKNRQIQQIQPTFSVPTSVMQPIYEEATLNPKMAAKIERQQRWTRREEADFYRVVSTFGVVFDPDRGQFDWTKFRAMARLHKKTDDSLEKYLYAFMSMCRRVCRLPSKEELVDPNIFIQPITEERASRTLYRIELLRKVREQALRHPQLFERLKLCHPNPDLPVWWECGPHDRDLLIGAAKHGVSRTDYHILRDPELSFMAAQRNYSQSKMAHSRTSTPLLQQYQVALSASPLTSLPRLLDAKGIILEEMKVKSENLKEEPQSSEEESMSSVETRTLIKSEPVSPKNGVLPQATGDQKSGGKCETDRRMVAARTEPLTPNPASKKPRVHKRGSESSSDSDSDSERSSCSSRSSSSSSSSSCSHSRSGSSSSSSSSCSSASSSSSSSTSSSSSSSSSSSEESDSDEEEAQKRESTTHMKAYDEESVASLSTTQDETQDSFQMNNGTPESAYILQGGYMLAASYWPKDRVMINRLDSICQTVLKGKWPSARRSYDANTVASFYTTKLLDSPGAATEYSDPSVPTPPGAGVKEEHDQSTQMSKVKKHVREKEFTVKIKDEGGLKLTFQKQGLAQKRPFDGEDGALGQQQYLTRLRELQSASETSLVNFPKSIPVSGTSIQPTLGANGVILDNQPIVKKRRGRRKNVEGVDIFFFNRNKPPNHVSLGLTSSQISTGINPALSYTQPQGIPDTESPVPVINLKDGTRLAGDDAPKRKDLEKWLKEHPGYVEDLGAFIPRMQLHEGRPKQKRHRCRNPNKLDVNSLTGEERVQLINRRNARKVGGAFAPPLKDLCRFLKENSEYGVAPEWGDVVKQSGFLPESMYERILTGPVVREEVSRRGRRPKSGIAKATAAAAAASATSVSGNPLLANGLLPGVDLTTLQALQQNLQNLQSLQVTAGLMGMPTGLPSGGEAKNMAAMFPMLLSGMAGLPNLLGMGGLLTKPTESGTEDKKGSDSKESEGKTERTESQSSENGGENSVSSSPSTSSTAALNTAAAANPLALNPLLLSNILYPGMLLTPGLNLHIPTLSQSNTFDVQNKNSDLGSSKSVEVKEEDSRIKDQEDKGGTEPSPLNENSTDEGSEKADASSGSDSTSSSSEDSDSSNED.

Residues 173–201 show a composition bias toward polar residues; it reads QCTSLRSQQNRNNLNPGQNSLSQSKNFMN. Disordered regions lie at residues 173–265, 482–525, and 537–671; these read QCTS…CSVS, QRQP…KQEK, and AKER…SAPL. A Glycyl lysine isopeptide (Lys-Gly) (interchain with G-Cter in SUMO2) cross-link involves residue lysine 197. The span at 220–235 shows a compositional bias: low complexity; it reads SNSQQSISMQQFSQTS. Polar residues-rich tracts occupy residues 247–260 and 484–506; these read HQEGNFNGPSPNMT and QPPSSKKSDGSGTYTKLQNTQVR. Position 499 is an N6-acetyllysine (lysine 499). Basic and acidic residues predominate over residues 508–525; sequence MSEKKQRKKVESESKQEK. The residue at position 550 (serine 550) is a Phosphoserine. The span at 573–593 shows a compositional bias: basic and acidic residues; that stretch reads KPKDKDSKKTKTCSKLKEKTK. Lysine 596 participates in a covalent cross-link: Glycyl lysine isopeptide (Lys-Gly) (interchain with G-Cter in SUMO2). Phosphoserine is present on serine 611. A compositionally biased stretch (basic residues) spans 634–644; that stretch reads RRSNRQIKRKK. Residues 645–660 show a composition bias toward basic and acidic residues; it reads YAEDIEGKQSEEEVKG. 2 Chromo domains span residues 690 to 761 and 773 to 839; these read AIVD…HFFA and VEVD…RLDR. The LXXLL motif 1 signature appears at 868–872; sequence LNWLL. Residues 872–1046 enclose the Helicase ATP-binding domain; that stretch reads LFNWYNRRNC…FSLLHFLEPL (175 aa). 885–892 provides a ligand contact to ATP; sequence DEMGLGKT. Positions 997–1000 match the DEAH box motif; the sequence is DEAH. The LXXLL motif 2 signature appears at 1036 to 1040; that stretch reads LFSLL. The 152-residue stretch at 1186–1337 folds into the Helicase C-terminal domain; it reads LIDKLLPKMK…KAVLQSMSGR (152 aa). A disordered region spans residues 1461 to 1484; it reads KDELAELSEAESEGDEKPKLRRPC. Acidic residues predominate over residues 1465-1474; the sequence is AELSEAESEG. A phosphoserine mark is found at serine 1468 and serine 1472. Over residues 1475–1484 the composition is skewed to basic and acidic residues; sequence DEKPKLRRPC. Residues lysine 1588, lysine 1738, and lysine 1903 each participate in a glycyl lysine isopeptide (Lys-Gly) (interchain with G-Cter in SUMO2) cross-link. Serine 2026 carries the phosphoserine modification. The LXXLL motif 3 motif lies at 2031-2035; that stretch reads LPRLL. Lysine 2038 participates in a covalent cross-link: Glycyl lysine isopeptide (Lys-Gly) (interchain with G-Cter in SUMO2). 2 disordered regions span residues 2050-2238 and 2305-2337; these read ENLK…QMNN and GAATEYSDPSVPTPPGAGVKEEHDQSTQMSKVK. Phosphoserine is present on residues serine 2058 and serine 2059. A Glycyl lysine isopeptide (Lys-Gly) (interchain with G-Cter in SUMO2) cross-link involves residue lysine 2074. A phosphoserine mark is found at serine 2075 and serine 2079. Basic and acidic residues predominate over residues 2094–2104; sequence SGGKCETDRRM. The span at 2141–2193 shows a compositional bias: low complexity; the sequence is SSCSSRSSSSSSSSSCSHSRSGSSSSSSSSCSSASSSSSSSTSSSSSSSSSSS. A compositionally biased stretch (basic and acidic residues) spans 2203–2216; it reads AQKRESTTHMKAYD. Residues 2221 to 2238 show a composition bias toward polar residues; it reads ASLSTTQDETQDSFQMNN. Residues 2332–2481 form a binds A/T-rich DNA region; that stretch reads QMSKVKKHVR…LSYTQPQGIP (150 aa). Residues lysine 2350, lysine 2356, and lysine 2361 each participate in a glycyl lysine isopeptide (Lys-Gly) (interchain with G-Cter in SUMO2) cross-link. Positions 2429-2436 are a.T hook-like; the sequence is KKRRGRRK. An LXXLL motif 4 motif is present at residues 2721–2725; sequence LPNLL. Positions 2729–2777 are disordered; it reads GLLTKPTESGTEDKKGSDSKESEGKTERTESQSSENGGENSVSSSPSTS. Residues 2739–2758 are compositionally biased toward basic and acidic residues; it reads TEDKKGSDSKESEGKTERTE. The span at 2759-2777 shows a compositional bias: low complexity; sequence SQSSENGGENSVSSSPSTS. The short motif at 2793 to 2797 is the LXXLL motif 5 element; that stretch reads LNPLL. The segment at 2827-2897 is disordered; it reads VQNKNSDLGS…SEDSDSSNED (71 aa). Residues 2840–2857 show a composition bias toward basic and acidic residues; the sequence is VEVKEEDSRIKDQEDKGG. A Glycyl lysine isopeptide (Lys-Gly) (interchain with G-Cter in SUMO2) cross-link involves residue lysine 2843. Over residues 2877-2888 the composition is skewed to low complexity; the sequence is ASSGSDSTSSSS.

It belongs to the SNF2/RAD54 helicase family. In terms of assembly, interacts with PPARA. Probably interacts with ESR1 and NR1I3. In terms of processing, phosphorylated on serine and tyrosine residues. Widely expressed at low levels. In bone marrow, expression is restricted to osteoprogenitor cells adjacent to mature osteoblasts.

The protein localises to the cytoplasm. It is found in the nucleus. It carries out the reaction ATP + H2O = ADP + phosphate + H(+). Functionally, probable ATP-dependent chromatin-remodeling factor. Acts as a transcriptional coactivator for PPARA and possibly other nuclear receptors. Has DNA-dependent ATPase activity and binds to A/T-rich DNA. Associates with A/T-rich regulatory regions in promoters of genes that participate in the differentiation of progenitors during osteogenesis. This Homo sapiens (Human) protein is Chromodomain-helicase-DNA-binding protein 9 (CHD9).